A 273-amino-acid chain; its full sequence is Glutamate 5-kinase (273 aa).

An ATP-binding site is contributed by Lys15. Positions 55, 142, and 158 each coordinate substrate. ATP-binding positions include 178–179 and 220–226; these read SD and TGGMLSK.

Belongs to the glutamate 5-kinase family.

It localises to the cytoplasm. It catalyses the reaction L-glutamate + ATP = L-glutamyl 5-phosphate + ADP. Its pathway is amino-acid biosynthesis; L-proline biosynthesis; L-glutamate 5-semialdehyde from L-glutamate: step 1/2. Its function is as follows. Catalyzes the transfer of a phosphate group to glutamate to form L-glutamate 5-phosphate. The chain is Glutamate 5-kinase from Streptococcus pyogenes serotype M18 (strain MGAS8232).